A 953-amino-acid polypeptide reads, in one-letter code: ATP-dependent 6-phosphofructokinase (953 aa).

The interval 1–558 (MIEGISFASF…QLQGFLLTNS (558 aa)) is N-terminal catalytic PFK domain 1. ATP is bound by residues Gly-193, 256–257 (RC), and 286–289 (GDGS). Asp-287 lines the Mg(2+) pocket. Substrate is bound by residues 332 to 334 (SID), Arg-369, 376 to 378 (MGR), Glu-433, Arg-460, and 466 to 469 (HVQR). Asp-334 serves as the catalytic Proton acceptor. Positions 559-572 (ADKDRPQEPAKDPL) are interdomain linker. The interval 573-953 (RVAIVCTGAP…AKEQGIIDPC (381 aa)) is C-terminal regulatory PFK domain 2. Residues Arg-645, 702-706 (TISNN), Arg-740, 747-749 (QGG), Glu-807, Arg-833, 839-842 (HVQQ), and Arg-906 contribute to the beta-D-fructose 2,6-bisphosphate site.

It belongs to the phosphofructokinase type A (PFKA) family. ATP-dependent PFK group I subfamily. Eukaryotic two domain clade 'E' sub-subfamily. Heterooctamer of 4 alpha and 4 beta chains. It depends on Mg(2+) as a cofactor.

It is found in the cytoplasm. The enzyme catalyses beta-D-fructose 6-phosphate + ATP = beta-D-fructose 1,6-bisphosphate + ADP + H(+). The protein operates within carbohydrate degradation; glycolysis; D-glyceraldehyde 3-phosphate and glycerone phosphate from D-glucose: step 3/4. Its activity is regulated as follows. Allosterically activated by ADP, AMP, or fructose 2,6-bisphosphate, and allosterically inhibited by ATP or citrate. Catalyzes the phosphorylation of D-fructose 6-phosphate to fructose 1,6-bisphosphate by ATP, the first committing step of glycolysis. This is ATP-dependent 6-phosphofructokinase (PFK1) from Yarrowia lipolytica (strain CLIB 122 / E 150) (Yeast).